We begin with the raw amino-acid sequence, 583 residues long: Putative amidase C869.01 (583 aa).

The N-terminal stretch at 1-19 (MKLQLLFLTLAQLAKHGLA) is a signal peptide. Catalysis depends on charge relay system residues K141 and S222. S246 serves as the catalytic Acyl-ester intermediate.

It belongs to the amidase family.

It is found in the cytoplasm. It carries out the reaction a monocarboxylic acid amide + H2O = a monocarboxylate + NH4(+). This Schizosaccharomyces pombe (strain 972 / ATCC 24843) (Fission yeast) protein is Putative amidase C869.01.